A 130-amino-acid chain; its full sequence is Ribosome-binding factor A (130 aa).

The protein belongs to the RbfA family. In terms of assembly, monomer. Binds 30S ribosomal subunits, but not 50S ribosomal subunits or 70S ribosomes.

The protein resides in the cytoplasm. One of several proteins that assist in the late maturation steps of the functional core of the 30S ribosomal subunit. Associates with free 30S ribosomal subunits (but not with 30S subunits that are part of 70S ribosomes or polysomes). Required for efficient processing of 16S rRNA. May interact with the 5'-terminal helix region of 16S rRNA. The chain is Ribosome-binding factor A from Prochlorococcus marinus (strain MIT 9215).